Here is a 453-residue protein sequence, read N- to C-terminus: tRNA(Ile)-lysidine synthase (453 aa).

ATP is bound at residue 27-32; that stretch reads SGGSDS.

This sequence belongs to the tRNA(Ile)-lysidine synthase family.

It localises to the cytoplasm. It carries out the reaction cytidine(34) in tRNA(Ile2) + L-lysine + ATP = lysidine(34) in tRNA(Ile2) + AMP + diphosphate + H(+). Functionally, ligates lysine onto the cytidine present at position 34 of the AUA codon-specific tRNA(Ile) that contains the anticodon CAU, in an ATP-dependent manner. Cytidine is converted to lysidine, thus changing the amino acid specificity of the tRNA from methionine to isoleucine. In Rhizobium meliloti (strain 1021) (Ensifer meliloti), this protein is tRNA(Ile)-lysidine synthase.